The chain runs to 95 residues: Ribonuclease P protein component 1 (95 aa).

The protein belongs to the eukaryotic/archaeal RNase P protein component 1 family. In terms of assembly, consists of a catalytic RNA component and at least 4 protein subunits. Forms a subcomplex with Rnp4 which stimulates the catalytic RNA.

Its subcellular location is the cytoplasm. It catalyses the reaction Endonucleolytic cleavage of RNA, removing 5'-extranucleotides from tRNA precursor.. Functionally, part of ribonuclease P, a protein complex that generates mature tRNA molecules by cleaving their 5'-ends. The polypeptide is Ribonuclease P protein component 1 (Methanocaldococcus jannaschii (strain ATCC 43067 / DSM 2661 / JAL-1 / JCM 10045 / NBRC 100440) (Methanococcus jannaschii)).